We begin with the raw amino-acid sequence, 89 residues long: Cell division topological specificity factor (89 aa).

This sequence belongs to the MinE family.

Its function is as follows. Prevents the cell division inhibition by proteins MinC and MinD at internal division sites while permitting inhibition at polar sites. This ensures cell division at the proper site by restricting the formation of a division septum at the midpoint of the long axis of the cell. The chain is Cell division topological specificity factor from Serratia proteamaculans (strain 568).